A 216-amino-acid chain; its full sequence is MALSEAAVKVQAALLERGLETPMLPSVYSSEERKDKIEHHMKEILTLMSLDLSDDSLADTPRRIAKMYVDEIFSGLDYANFPKITVIDNKMGFDEMVRVQDISLTSTCEHHLVTIDGTATIAYLPRKKIIGLSKINRIVRFFAQRPQVQERLTQQVLVALQTLLETKDVAVKMDAVHYCVKSRGVMDSTSSTTTTALGGIFKSNPATRAEFLHQSK.

The Zn(2+) site is built by Cys108, His111, and Cys179.

The protein belongs to the GTP cyclohydrolase I family. As to quaternary structure, homomer.

It catalyses the reaction GTP + H2O = 7,8-dihydroneopterin 3'-triphosphate + formate + H(+). Its pathway is cofactor biosynthesis; 7,8-dihydroneopterin triphosphate biosynthesis; 7,8-dihydroneopterin triphosphate from GTP: step 1/1. This Shewanella baltica (strain OS223) protein is GTP cyclohydrolase 1.